The primary structure comprises 466 residues: Chromosomal replication initiator protein DnaA (466 aa).

The tract at residues Met1–Ala85 is domain I, interacts with DnaA modulators. Residues Pro82–Leu122 are disordered. Polar residues predominate over residues Ala85–Leu122. Positions Ala85–Ser129 are domain II. Residues Asn130–Ala346 are domain III, AAA+ region. Residues Gly174, Gly176, Lys177, and Thr178 each contribute to the ATP site. Residues Asn347 to Ser466 are domain IV, binds dsDNA.

Belongs to the DnaA family. As to quaternary structure, oligomerizes as a right-handed, spiral filament on DNA at oriC.

The protein localises to the cytoplasm. Functionally, plays an essential role in the initiation and regulation of chromosomal replication. ATP-DnaA binds to the origin of replication (oriC) to initiate formation of the DNA replication initiation complex once per cell cycle. Binds the DnaA box (a 9 base pair repeat at the origin) and separates the double-stranded (ds)DNA. Forms a right-handed helical filament on oriC DNA; dsDNA binds to the exterior of the filament while single-stranded (ss)DNA is stabiized in the filament's interior. The ATP-DnaA-oriC complex binds and stabilizes one strand of the AT-rich DNA unwinding element (DUE), permitting loading of DNA polymerase. After initiation quickly degrades to an ADP-DnaA complex that is not apt for DNA replication. Binds acidic phospholipids. In Proteus mirabilis (strain HI4320), this protein is Chromosomal replication initiator protein DnaA.